The chain runs to 142 residues: Large ribosomal subunit protein uL11 (142 aa).

Belongs to the universal ribosomal protein uL11 family. As to quaternary structure, part of the ribosomal stalk of the 50S ribosomal subunit. Interacts with L10 and the large rRNA to form the base of the stalk. L10 forms an elongated spine to which L12 dimers bind in a sequential fashion forming a multimeric L10(L12)X complex. One or more lysine residues are methylated.

Functionally, forms part of the ribosomal stalk which helps the ribosome interact with GTP-bound translation factors. This is Large ribosomal subunit protein uL11 from Shewanella halifaxensis (strain HAW-EB4).